A 354-amino-acid chain; its full sequence is Heat-inducible transcription repressor HrcA (354 aa).

Belongs to the HrcA family.

Functionally, negative regulator of class I heat shock genes (grpE-dnaK-dnaJ and groELS operons). Prevents heat-shock induction of these operons. This is Heat-inducible transcription repressor HrcA from Herpetosiphon aurantiacus (strain ATCC 23779 / DSM 785 / 114-95).